The following is a 563-amino-acid chain: MLEEAGEVLENMLKASCLPLGFIVFLPAVLLLVAPPLPAADAAHEFTVYRMQQYDLQGQPYGTRNAVLNTEARTMAAEVLSRRCVLMRLLDFSYEQYQKALRQSAGAVVIILPRAMAAVPQDVVRQFMEIEPEMLAMETAVPVYFAVEDEALLSIYKQTQAASASQGSASAAEVLLRTATANGFQMVTSGVQSKAVSDWLIASVEGRLTGLGGEDLPTIVIVAHYDAFGVAPWLSLGADSNGSGVSVLLELARLFSRLYTYKRTHAAYNLLFFASGGGKFNYQGTKRWLEDNLDHTDSSLLQDNVAFVLCLDTVGRGSSLHLHVSKPPREGTLQHAFLRELETVAAHQFPEVRFSMVHKRINLAEDVLAWEHERFAIRRLPAFTLSHLESHRDGQRSSIMDVRSRVDSKTLTRNTRIIAEALTRVIYNLTEKGTPPDMPVFTEQMQIQQEQLDSVMDWLTNQPRAAQLVDKDSTFLSTLEHHLSRYLKDVKQHHVKADKRDPEFVFYDQLKQVMNAYRVKPAVFDLLLAVGIAAYLGMAYVAVQHFSLLYKTVQRLLVKAKTQ.

The signal sequence occupies residues Met-1–Ala-42. Residues Ala-43–Ala-522 are Lumenal-facing. N-linked (GlcNAc...) asparagine glycans are attached at residues Asn-241 and Asn-428. The chain crosses the membrane as a helical span at residues Val-523–Val-543. At Gln-544–Gln-563 the chain is on the cytoplasmic side.

Belongs to the nicastrin family. Component of the back of Sec61 (BOS) complex, composed of NCLN/Nicalin, NOMO (NOMO1, NOMO2 or NOMO3) and TMEM147. The BOS complex is part of the multi-pass translocon (MPT) complex, composed of three subcomplexes, the GEL complex (composed of RAB5IF/OPTI and TMCO1), the BOS complex (composed of NCLN/Nicalin, NOMO and TMEM147) and the PAT complex (composed of WDR83OS/Asterix and CCDC47). The MPT complex associates with the SEC61 complex. Highly expressed in pancreas and skeletal muscle and, at lower levels, in heart.

Its subcellular location is the endoplasmic reticulum membrane. Functionally, component of the multi-pass translocon (MPT) complex that mediates insertion of multi-pass membrane proteins into the lipid bilayer of membranes. The MPT complex takes over after the SEC61 complex: following membrane insertion of the first few transmembrane segments of proteins by the SEC61 complex, the MPT complex occludes the lateral gate of the SEC61 complex to promote insertion of subsequent transmembrane regions. May antagonize Nodal signaling and subsequent organization of axial structures during mesodermal patterning, via its interaction with NOMO. This is BOS complex subunit NCLN from Homo sapiens (Human).